The chain runs to 534 residues: Serine/threonine-protein phosphatase 2B catalytic subunit (534 aa).

Fe cation is bound by residues Asp-88, His-90, and Asp-116. Zn(2+) is bound by residues Asp-116 and Asn-148. The active-site Proton donor is His-149. Zn(2+) contacts are provided by His-197 and His-279. 2 disordered regions span residues 375–398 (LEDE…DVES) and 475–534 (PSHE…TREA). 2 stretches are compositionally biased toward basic and acidic residues: residues 475–497 (PSHE…RAQQ) and 524–534 (QRDAARETREA).

The protein belongs to the PPP phosphatase family. PP-2B subfamily. Composed of two components (A and B), the A component is the catalytic subunit and the B component confers calcium sensitivity. Requires Fe(3+) as cofactor. It depends on Zn(2+) as a cofactor.

It carries out the reaction O-phospho-L-seryl-[protein] + H2O = L-seryl-[protein] + phosphate. It catalyses the reaction O-phospho-L-threonyl-[protein] + H2O = L-threonyl-[protein] + phosphate. Its function is as follows. Calcium-dependent, calmodulin-stimulated protein phosphatase. This subunit may have a role in the calmodulin activation of calcineurin. This Aspergillus fumigatus (strain ATCC MYA-4609 / CBS 101355 / FGSC A1100 / Af293) (Neosartorya fumigata) protein is Serine/threonine-protein phosphatase 2B catalytic subunit (cnaA).